A 124-amino-acid polypeptide reads, in one-letter code: Fluoride-specific ion channel FluC (124 aa).

Transmembrane regions (helical) follow at residues 4–24, 35–55, 60–80, and 102–122; these read LLLV…ISIF, FGTL…YALG, ISPE…TTFS, and VVLN…LVFS. Residues G74 and T77 each contribute to the Na(+) site.

This sequence belongs to the fluoride channel Fluc/FEX (TC 1.A.43) family.

The protein resides in the cell inner membrane. The catalysed reaction is fluoride(in) = fluoride(out). With respect to regulation, na(+) is not transported, but it plays an essential structural role and its presence is essential for fluoride channel function. Fluoride-specific ion channel. Important for reducing fluoride concentration in the cell, thus reducing its toxicity. The sequence is that of Fluoride-specific ion channel FluC from Shewanella sp. (strain ANA-3).